A 1015-amino-acid chain; its full sequence is MSKKPPNRPGITFEIGARLEALDYLQKWYPSRIEKIDYEEGKMLVHFERWSHRYDEWIYWDSNRLRPLERPSLRKEGLKDEEDLFDFKAGEEVLARWTDCRYYPAKIEAINKEGTFTVQFYDGVIRCLKRMHIKAMPEDAKGQVKSQHPLSWCCPIDPAGSCNQSMGSEDWIALVKAAAAAAAKNKTGSKPRTSANSNKEKERDGGKWFKVPSKKAETSTCIVTAEIEKKEELPTSSEPFGLHIDSVPKIVFPQPESTLTNKRKNNQGNSFQAKRARLNKITGLLASKAVGVDGAEKKEDCSATAPVLEQAISPKPQSQKKNEAVISSSANTQKPALLSSTLSSGKARSKKCKHESGESSGCIKAPKSPLAPELIQAKDLTLVSQLSSVINKTSSPQPVNPPRPCKHSERRRRSQRLATLPMPDDSLEKLSSSSSATDGKVFSISSQNQQESSVPEVPAIAYVPLQKLGPCLPLDLSCGSEVTGSQAPDSSYPGGECPREEKEETPLFANPTSKVVSDVKGAAAATGILKTEKKVKLEEKTSTAFGKRKEKDKERKEKRDKDHYKPKQKKKKKKKKKSKQHDYSDYEDSSLDFLERCSSPLTRSSGSSLAPRSTFTEKTTTYQYPRAILSVDLSGENLSDVEFLDDSSTESLLLSGDEYNQDFDSTNFEESQDEDDALNEIVRCICELDEENGFMIQCEECLCWQHSVCMGLLEDSIPEQYICYICRDPPGQRWNAKYRYDKEWLNNGRMYGLSFVKENYSHLNAKKIVSTHHLLADVYGITEVLHGLQLKIGILKNKHHPDLRLWAYSGKRKDQDQVVAGAERKVILQDTANSEGRKYVQNHKEPPLKMEETYITSEHSYQKPQSFSQDCHSLTDPGSSDDDDVSSFEEDGELHVADNSHLLYSVKERGVSEKNPASENKVFVYNDKKGMEGPGDAHLQWQLNLLTHIENVQNEVTSRMDLIEKEVDVLESWLDFTGELEPPDPLARLPQLKRHIKQLLLDMGKVQQIATLCSV.

The region spanning 11–71 (ITFEIGARLE…SNRLRPLERP (61 aa)) is the Tudor 1 domain. Residues lysine 75 and lysine 79 each participate in a glycyl lysine isopeptide (Lys-Gly) (interchain with G-Cter in SUMO2) cross-link. The region spanning 85–141 (FDFKAGEEVLARWTDCRYYPAKIEAINKEGTFTVQFYDGVIRCLKRMHIKAMPEDAK) is the Tudor 2 domain. 2 disordered regions span residues 183-206 (AKNK…RDGG) and 309-367 (EQAI…KAPK). Composition is skewed to polar residues over residues 186–197 (KTGSKPRTSANS) and 315–346 (KPQS…SSGK). Residue serine 368 is modified to Phosphoserine. 2 disordered regions span residues 389 to 455 (VINK…SSVP) and 478 to 513 (CGSE…NPTS). Over residues 404-415 (PCKHSERRRRSQ) the composition is skewed to basic residues. Serine 432 is modified (phosphoserine). 2 stretches are compositionally biased toward polar residues: residues 443 to 453 (SISSQNQQESS) and 480 to 489 (SEVTGSQAPD). Lysine 530 participates in a covalent cross-link: Glycyl lysine isopeptide (Lys-Gly) (interchain with G-Cter in SUMO2). Positions 539–565 (EKTSTAFGKRKEKDKERKEKRDKDHYK) are enriched in basic and acidic residues. Positions 539-585 (EKTSTAFGKRKEKDKERKEKRDKDHYKPKQKKKKKKKKKSKQHDYSD) are disordered. Positions 566 to 579 (PKQKKKKKKKKKSK) are enriched in basic residues. The segment at 681 to 729 (IVRCICELDEENGFMIQCEECLCWQHSVCMGLLEDSIPEQYICYICRDP) adopts a PHD-type zinc-finger fold. Residue lysine 849 forms a Glycyl lysine isopeptide (Lys-Gly) (interchain with G-Cter in SUMO2) linkage. Residues 859-878 (HSYQKPQSFSQDCHSLTDPG) are compositionally biased toward polar residues. Residues 859–889 (HSYQKPQSFSQDCHSLTDPGSSDDDDVSSFE) form a disordered region. Over residues 879–889 (SSDDDDVSSFE) the composition is skewed to acidic residues. Lysine 907 carries the post-translational modification N6-acetyllysine.

As to quaternary structure, interacts with methylated DNMT1 (DNMT1K142me1). Interacts with SOX2.

The protein localises to the nucleus. In terms of biological role, is a negative regulator of proteasomal degradation of a set of methylated proteins, including DNMT1 and SOX2. Involved in the maintainance of embryonic stem cells pluripotency, through the regulation of SOX2 levels. In Rattus norvegicus (Rat), this protein is PHD finger protein 20-like protein 1 (Phf20l1).